Reading from the N-terminus, the 459-residue chain is Argininosuccinate lyase (459 aa).

This sequence belongs to the lyase 1 family. Argininosuccinate lyase subfamily.

It is found in the cytoplasm. It catalyses the reaction 2-(N(omega)-L-arginino)succinate = fumarate + L-arginine. It participates in amino-acid biosynthesis; L-arginine biosynthesis; L-arginine from L-ornithine and carbamoyl phosphate: step 3/3. This chain is Argininosuccinate lyase, found in Staphylococcus aureus (strain bovine RF122 / ET3-1).